A 219-amino-acid chain; its full sequence is uncharacterized protein (219 aa).

This is an uncharacterized protein from Acanthamoeba polyphaga mimivirus (APMV).